Here is a 134-residue protein sequence, read N- to C-terminus: MEFVMKQALGGATKDMGKMLGGDEEKDPDAAKKEEERQEALRQAEEERKAKYAKMEAEREAVRQGIRDKYGIKKKEEREAEAQAAMEANSEGSLTRPKKAIPPGCGDEVEEEDESILDTVIKYLPGPLQDMLKK.

2 disordered regions span residues 1 to 60 and 74 to 113; these read MEFV…AERE and KKEE…EEED. Residues 15–60 show a composition bias toward basic and acidic residues; it reads DMGKMLGGDEEKDPDAAKKEEERQEALRQAEEERKAKYAKMEAERE. Residues 29 to 69 are a coiled coil; that stretch reads DAAKKEEERQEALRQAEEERKAKYAKMEAEREAVRQGIRDK. Residues 48-70 are interaction with the SNARE complex; sequence RKAKYAKMEAEREAVRQGIRDKY.

It belongs to the complexin/synaphin family. As to quaternary structure, binds to the SNARE core complex containing SNAP25, VAMP2 and STX1A. Nervous system. In hippocampus and cerebellum, expressed mainly by inhibitory neurons. Overexpressed in substantia nigra from patients with Parkinson disease.

It is found in the cytoplasm. Its subcellular location is the cytosol. It localises to the perikaryon. The protein localises to the presynapse. In terms of biological role, positively regulates a late step in exocytosis of various cytoplasmic vesicles, such as synaptic vesicles and other secretory vesicles. Organizes the SNAREs into a cross-linked zigzag topology that, when interposed between the vesicle and plasma membranes, is incompatible with fusion, thereby preventing SNAREs from releasing neurotransmitters until an action potential arrives at the synapse. Also involved in glucose-induced secretion of insulin by pancreatic beta-cells. Essential for motor behavior. The sequence is that of Complexin-1 (CPLX1) from Homo sapiens (Human).